We begin with the raw amino-acid sequence, 388 residues long: Mannitol-1-phosphate 5-dehydrogenase (388 aa).

3–14 (ALHFGAGNIGRG) lines the NAD(+) pocket.

Belongs to the mannitol dehydrogenase family.

The catalysed reaction is D-mannitol 1-phosphate + NAD(+) = beta-D-fructose 6-phosphate + NADH + H(+). This Buchnera aphidicola subsp. Schizaphis graminum (strain Sg) protein is Mannitol-1-phosphate 5-dehydrogenase.